Consider the following 162-residue polypeptide: ATP synthase subunit b (162 aa).

A helical transmembrane segment spans residues 6–26 (PDIGLLFWMLLSFGIVFFVAA).

It belongs to the ATPase B chain family. As to quaternary structure, F-type ATPases have 2 components, F(1) - the catalytic core - and F(0) - the membrane proton channel. F(1) has five subunits: alpha(3), beta(3), gamma(1), delta(1), epsilon(1). F(0) has three main subunits: a(1), b(2) and c(10-14). The alpha and beta chains form an alternating ring which encloses part of the gamma chain. F(1) is attached to F(0) by a central stalk formed by the gamma and epsilon chains, while a peripheral stalk is formed by the delta and b chains.

The protein localises to the cell inner membrane. In terms of biological role, f(1)F(0) ATP synthase produces ATP from ADP in the presence of a proton or sodium gradient. F-type ATPases consist of two structural domains, F(1) containing the extramembraneous catalytic core and F(0) containing the membrane proton channel, linked together by a central stalk and a peripheral stalk. During catalysis, ATP synthesis in the catalytic domain of F(1) is coupled via a rotary mechanism of the central stalk subunits to proton translocation. Functionally, component of the F(0) channel, it forms part of the peripheral stalk, linking F(1) to F(0). The polypeptide is ATP synthase subunit b (Azobacteroides pseudotrichonymphae genomovar. CFP2).